Consider the following 175-residue polypeptide: Nucleoside triphosphate/diphosphate phosphatase (175 aa).

Residue Arg-23 is the Proton donor of the active site. Mg(2+) contacts are provided by Asn-87, Asp-103, Asp-105, Asp-107, Asp-120, and Glu-123.

This sequence belongs to the Ntdp family. The cofactor is Mg(2+).

It carries out the reaction a ribonucleoside 5'-triphosphate + H2O = a ribonucleoside 5'-diphosphate + phosphate + H(+). The enzyme catalyses a ribonucleoside 5'-diphosphate + H2O = a ribonucleoside 5'-phosphate + phosphate + H(+). Its function is as follows. Has nucleoside phosphatase activity towards nucleoside triphosphates and nucleoside diphosphates. In Listeria innocua serovar 6a (strain ATCC BAA-680 / CLIP 11262), this protein is Nucleoside triphosphate/diphosphate phosphatase.